The primary structure comprises 129 residues: Large-conductance mechanosensitive channel (129 aa).

2 helical membrane-spanning segments follow: residues 10-30 and 76-96; these read FAVK…GAFG and GAFI…FGMV.

This sequence belongs to the MscL family. As to quaternary structure, homopentamer.

The protein resides in the cell inner membrane. In terms of biological role, channel that opens in response to stretch forces in the membrane lipid bilayer. May participate in the regulation of osmotic pressure changes within the cell. In Actinobacillus pleuropneumoniae serotype 5b (strain L20), this protein is Large-conductance mechanosensitive channel.